The primary structure comprises 175 residues: NADH-ubiquinone oxidoreductase chain 6 (175 aa).

The next 6 membrane-spanning stretches (helical) occupy residues 1-21 (MMYIVFIMSVLYVVGFIGFSS), 25-45 (PVYGGMSLVVSGGLGCGIIMG), 51-71 (LGLVVFLVYLGGMMVVFGYTI), 87-107 (VVLGAFLVGLLMEVFMIMWLF), 112-132 (ELVGFYFGGLEDLMVLGEGGF), and 148-168 (YGFWFLAMAGWMLFVSIFIAI).

It belongs to the complex I subunit 6 family. In terms of assembly, core subunit of respiratory chain NADH dehydrogenase (Complex I) which is composed of 45 different subunits.

The protein localises to the mitochondrion inner membrane. It catalyses the reaction a ubiquinone + NADH + 5 H(+)(in) = a ubiquinol + NAD(+) + 4 H(+)(out). Core subunit of the mitochondrial membrane respiratory chain NADH dehydrogenase (Complex I) which catalyzes electron transfer from NADH through the respiratory chain, using ubiquinone as an electron acceptor. Essential for the catalytic activity and assembly of complex I. The sequence is that of NADH-ubiquinone oxidoreductase chain 6 (MT-ND6) from Loxodonta africana (African elephant).